We begin with the raw amino-acid sequence, 338 residues long: Adenylosuccinate synthetase (338 aa).

GTP is bound by residues 12–18 (GDEGKGK) and 42–44 (GHT). The active-site Proton acceptor is Asp-13. Positions 13 and 42 each coordinate Mg(2+). IMP-binding positions include 13–16 (DEGK), 40–43 (NAGH), Thr-127, Arg-141, Gln-179, Thr-194, and Arg-256. His-43 (proton donor) is an active-site residue. 252–258 (TVTGRRR) is a binding site for substrate. GTP contacts are provided by residues Arg-258, 284 to 286 (CLD), and 324 to 326 (STG).

The protein belongs to the adenylosuccinate synthetase family. In terms of assembly, homodimer. It depends on Mg(2+) as a cofactor.

The protein localises to the cytoplasm. The enzyme catalyses IMP + L-aspartate + GTP = N(6)-(1,2-dicarboxyethyl)-AMP + GDP + phosphate + 2 H(+). It participates in purine metabolism; AMP biosynthesis via de novo pathway; AMP from IMP: step 1/2. Plays an important role in the de novo pathway of purine nucleotide biosynthesis. Catalyzes the first committed step in the biosynthesis of AMP from IMP. This Methanococcus maripaludis (strain C7 / ATCC BAA-1331) protein is Adenylosuccinate synthetase.